A 386-amino-acid chain; its full sequence is 3-ketoacyl-CoA thiolase (386 aa).

Catalysis depends on cysteine 91, which acts as the Acyl-thioester intermediate. Active-site proton acceptor residues include histidine 342 and cysteine 372.

This sequence belongs to the thiolase-like superfamily. Thiolase family. In terms of assembly, heterotetramer of two alpha chains (FadB) and two beta chains (FadA).

Its subcellular location is the cytoplasm. The catalysed reaction is an acyl-CoA + acetyl-CoA = a 3-oxoacyl-CoA + CoA. Its pathway is lipid metabolism; fatty acid beta-oxidation. Its function is as follows. Catalyzes the final step of fatty acid oxidation in which acetyl-CoA is released and the CoA ester of a fatty acid two carbons shorter is formed. The polypeptide is 3-ketoacyl-CoA thiolase (Colwellia psychrerythraea (strain 34H / ATCC BAA-681) (Vibrio psychroerythus)).